Here is a 351-residue protein sequence, read N- to C-terminus: MSLVCLTDFQAHAREQLSKSTRDFIEGGADDSITRDDNIAAFKRIRLRPRYLRDVSEVDTRTTIQGEEISAPICIAPTGFHCLVWPDGEMSTARAAQAAGICYITSTFASCSLEDIVIAAPEGLRWFQLYVHPDLQLNKQLIQRVESLGFKALVITLDTPVCGNRRHDIRNQLRRNLTLTDLQSPKKGNAIPYFQMTPISTSLCWNDLSWFQSITRLPIILKGILTKEDAELAVKHNVQGIIVSNHGGRQLDEVLASIDALTEVVAAVKGKIEVYLDGGVRTGNDVLKALALGAKCIFLGRPILWGLACKGEHGVKEVLNILTNEFHTSMALTGCRSVAEINRNLVQFSRL.

The FMN hydroxy acid dehydrogenase domain occupies 2–351 (SLVCLTDFQA…NRNLVQFSRL (350 aa)). FMN contacts are provided by residues 77-79 (PTG), Ser-106, and Gln-128. Tyr-130 contacts a 2-oxocarboxylate. Residue Thr-156 participates in FMN binding. Residue Arg-165 coordinates a 2-oxocarboxylate. Thr-178 is modified (phosphothreonine). An FMN-binding site is contributed by Lys-222. His-246 serves as the catalytic Proton acceptor. A 2-oxocarboxylate is bound at residue Arg-249. FMN-binding positions include 277-281 (DGGVR) and 300-301 (GR). The short motif at 349-351 (SRL) is the Microbody targeting signal element.

It belongs to the FMN-dependent alpha-hydroxy acid dehydrogenase family. Homotetramer. FMN is required as a cofactor. As to expression, expressed in the liver and kidney.

Its subcellular location is the peroxisome. It catalyses the reaction a (2S)-2-hydroxycarboxylate + O2 = a 2-oxocarboxylate + H2O2. The catalysed reaction is 2-hydroxyhexadecanoate + O2 = 2-oxohexadecanoate + H2O2. The enzyme catalyses 2-hydroxyoctanoate + O2 = 2-oxooctanoate + H2O2. Its pathway is lipid metabolism; fatty acid metabolism. Oxidase that catalyzes the oxidation of medium and long chain hydroxyacids such as 2-hydroxyhexadecanoate and 2-hydroxyoctanoate, to the correspondong 2-oxoacids. Its role in the oxidation of 2-hydroxy fatty acids may contribute to the general pathway of fatty acid alpha-oxidation. Active in vitro with the artificial electron acceptor 2,6-dichlorophenolindophenol (DCIP), but O2 is believed to be the physiological electron acceptor, leading to the production of H2O2. Is not active on glycolate, glyoxylate, L-lactate and 2-hydroxybutanoate. In Homo sapiens (Human), this protein is 2-Hydroxyacid oxidase 2 (HAO2).